The sequence spans 410 residues: Cell division protein FtsZ (410 aa).

GTP contacts are provided by residues 22–26 (GGGGN), 109–111 (GTG), Glu-140, Arg-144, and Asp-188. Residues 318–410 (ESKKDRKPHR…STPPFFRRKR (93 aa)) are disordered. The segment covering 330 to 344 (RQAVQPMQQTTQSVE) has biased composition (polar residues). Residues 360–398 (WDIRREQNTRPKVDESSLEQVDKKEFDTFHREEPNHNDD) are compositionally biased toward basic and acidic residues.

Belongs to the FtsZ family. In terms of assembly, homodimer. Polymerizes to form a dynamic ring structure in a strictly GTP-dependent manner. Interacts directly with several other division proteins.

It localises to the cytoplasm. Functionally, essential cell division protein that forms a contractile ring structure (Z ring) at the future cell division site. The regulation of the ring assembly controls the timing and the location of cell division. One of the functions of the FtsZ ring is to recruit other cell division proteins to the septum to produce a new cell wall between the dividing cells. Binds GTP and shows GTPase activity. The sequence is that of Cell division protein FtsZ from Enterococcus faecalis (strain ATCC 700802 / V583).